The following is a 454-amino-acid chain: tRNA modification GTPase MnmE (454 aa).

Arginine 23, glutamate 80, and lysine 120 together coordinate (6S)-5-formyl-5,6,7,8-tetrahydrofolate. Positions 216-377 (GMKVVIAGRP…LRNHLKQSMG (162 aa)) constitute a TrmE-type G domain. Asparagine 226 is a K(+) binding site. GTP is bound by residues 226–231 (NAGKSS), 245–251 (TDIAGTT), 270–273 (DTAG), 335–338 (NKAD), and 358–360 (SAR). A Mg(2+)-binding site is contributed by serine 230. K(+)-binding residues include threonine 245, isoleucine 247, and threonine 250. Threonine 251 provides a ligand contact to Mg(2+). Lysine 454 is a binding site for (6S)-5-formyl-5,6,7,8-tetrahydrofolate.

Belongs to the TRAFAC class TrmE-Era-EngA-EngB-Septin-like GTPase superfamily. TrmE GTPase family. Homodimer. Heterotetramer of two MnmE and two MnmG subunits. K(+) serves as cofactor.

The protein localises to the cytoplasm. Functionally, exhibits a very high intrinsic GTPase hydrolysis rate. Involved in the addition of a carboxymethylaminomethyl (cmnm) group at the wobble position (U34) of certain tRNAs, forming tRNA-cmnm(5)s(2)U34. This Escherichia coli (strain 55989 / EAEC) protein is tRNA modification GTPase MnmE.